The following is an 83-amino-acid chain: Putative beta-neurotoxin RjAa17f (83 aa).

Residues 1-18 (MKILIFIIASFMLIGVEC) form the signal peptide. One can recognise an LCN-type CS-alpha/beta domain in the interval 19-82 (KEGYPMGRNG…VWDFSNIKCR (64 aa)). Cystine bridges form between Cys29-Cys81, Cys33-Cys55, Cys40-Cys62, and Cys44-Cys64.

This sequence belongs to the long (4 C-C) scorpion toxin superfamily. Sodium channel inhibitor family. Beta subfamily. As to expression, expressed by the venom gland.

Its subcellular location is the secreted. Beta toxins bind voltage-independently at site-4 of sodium channels (Nav) and shift the voltage of activation toward more negative potentials thereby affecting sodium channel activation and promoting spontaneous and repetitive firing. The protein is Putative beta-neurotoxin RjAa17f of Rhopalurus junceus (Caribbean blue scorpion).